The primary structure comprises 1175 residues: Structural maintenance of chromosomes protein 2-1 (1175 aa).

The 1160-residue stretch at histidine 2 to aspartate 1161 folds into the Zinc-hook domain. Glycine 32–serine 39 is an ATP binding site. Residues arginine 172–tyrosine 508 are a coiled coil. The region spanning serine 518–alanine 638 is the SMC hinge domain. A coiled-coil region spans residues leucine 673–leucine 1028.

It belongs to the SMC family. SMC2 subfamily. In terms of assembly, forms a heterodimer with SMC4. Component of the condensin complex, which contains the SMC2 and SMC4 heterodimer, and three non SMC subunits that probably regulate the complex: CAPH, CAPD2 and CAPG. As to expression, highly expressed in roots and young floral buds.

It localises to the nucleus. In terms of biological role, central component of the condensin complex, a complex required for conversion of interphase chromatin into mitotic-like condense chromosomes. The condensin complex probably introduces positive supercoils into relaxed DNA in the presence of type I topoisomerases and converts nicked DNA into positive knotted forms in the presence of type II topoisomerases. Also involved in chromosome segregation in meiosis. The chain is Structural maintenance of chromosomes protein 2-1 (SMC2-1) from Arabidopsis thaliana (Mouse-ear cress).